A 107-amino-acid chain; its full sequence is Large ribosomal subunit protein uL24 (107 aa).

This sequence belongs to the universal ribosomal protein uL24 family. In terms of assembly, part of the 50S ribosomal subunit.

In terms of biological role, one of two assembly initiator proteins, it binds directly to the 5'-end of the 23S rRNA, where it nucleates assembly of the 50S subunit. One of the proteins that surrounds the polypeptide exit tunnel on the outside of the subunit. This chain is Large ribosomal subunit protein uL24, found in Streptomyces avermitilis (strain ATCC 31267 / DSM 46492 / JCM 5070 / NBRC 14893 / NCIMB 12804 / NRRL 8165 / MA-4680).